Here is a 248-residue protein sequence, read N- to C-terminus: Phosphoribosyl isomerase A (248 aa).

D14 functions as the Proton acceptor in the catalytic mechanism. The active-site Proton donor is D133.

The protein belongs to the HisA/HisF family.

Its subcellular location is the cytoplasm. It catalyses the reaction 1-(5-phospho-beta-D-ribosyl)-5-[(5-phospho-beta-D-ribosylamino)methylideneamino]imidazole-4-carboxamide = 5-[(5-phospho-1-deoxy-D-ribulos-1-ylimino)methylamino]-1-(5-phospho-beta-D-ribosyl)imidazole-4-carboxamide. The enzyme catalyses N-(5-phospho-beta-D-ribosyl)anthranilate = 1-(2-carboxyphenylamino)-1-deoxy-D-ribulose 5-phosphate. Its pathway is amino-acid biosynthesis; L-histidine biosynthesis; L-histidine from 5-phospho-alpha-D-ribose 1-diphosphate: step 4/9. The protein operates within amino-acid biosynthesis; L-tryptophan biosynthesis; L-tryptophan from chorismate: step 3/5. In terms of biological role, involved in both the histidine and tryptophan biosynthetic pathways. The protein is Phosphoribosyl isomerase A of Mycobacterium sp. (strain JLS).